A 2967-amino-acid chain; its full sequence is BEACH domain-containing protein lvsD (2967 aa).

10 disordered regions span residues 1–25 (MSSP…RIGG), 322–364 (NNNN…SSNS), 588–615 (ILSI…QQQL), 917–936 (NNSN…NNIN), 1077–1105 (GGSN…KDKD), 1173–1220 (NTSS…SDHR), 1583–1613 (NNNS…NNEN), 1831–1859 (QQQQ…SSVV), 1921–2009 (PQKT…TLNN), and 2029–2062 (KSTL…NNKN). The 263-residue stretch at 229–491 (MTFRKAPSSV…QDLFRKGSNY (263 aa)) folds into the BEACH 1 domain. Over residues 1079-1092 (SNNNNNNNNNNSNN) the composition is skewed to low complexity. A compositionally biased stretch (basic and acidic residues) spans 1093 to 1105 (NKDKIDSNNKDKD). Low complexity-rich tracts occupy residues 1185 to 1194 (PLLTSTKSMS), 1583 to 1611 (NNNS…LNNN), 1831 to 1857 (QQQQ…SSSS), 1926 to 1980 (QNQH…SFSN), 1993 to 2006 (NIIT…TTST), and 2034 to 2062 (SSSS…NNKN). A BEACH-type PH domain is found at 2060–2162 (NKNIKLEFST…ICAQILKLIG (103 aa)). BEACH domains are found at residues 2202–2492 (TPQQ…HPQR) and 2628–2785 (NSRV…IYSN). WD repeat units lie at residues 2658–2710 (NHKS…SDHH) and 2720–2761 (GHNF…KSIQ). Disordered stretches follow at residues 2798 to 2820 (SATT…SSNT) and 2915 to 2934 (PSTS…NNGN). Low complexity-rich tracts occupy residues 2811–2820 (SSSSLSSSNT) and 2924–2934 (NSNNNNNNNGN).

The chain is BEACH domain-containing protein lvsD (lvsD) from Dictyostelium discoideum (Social amoeba).